The following is a 260-amino-acid chain: GTP cyclohydrolase FolE2 (260 aa).

It belongs to the GTP cyclohydrolase IV family.

The catalysed reaction is GTP + H2O = 7,8-dihydroneopterin 3'-triphosphate + formate + H(+). Its pathway is cofactor biosynthesis; 7,8-dihydroneopterin triphosphate biosynthesis; 7,8-dihydroneopterin triphosphate from GTP: step 1/1. In terms of biological role, converts GTP to 7,8-dihydroneopterin triphosphate. In Desulfovibrio desulfuricans (strain ATCC 27774 / DSM 6949 / MB), this protein is GTP cyclohydrolase FolE2.